A 207-amino-acid chain; its full sequence is Holliday junction resolvase RecU (207 aa).

Positions 1-30 are disordered; sequence MPIRYPNGQPYSRSPKQGQAKKPLPADTYS. Positions 87, 89, 102, and 121 each coordinate Mg(2+).

The protein belongs to the RecU family. Mg(2+) is required as a cofactor.

It is found in the cytoplasm. It carries out the reaction Endonucleolytic cleavage at a junction such as a reciprocal single-stranded crossover between two homologous DNA duplexes (Holliday junction).. Functionally, endonuclease that resolves Holliday junction intermediates in genetic recombination. Cleaves mobile four-strand junctions by introducing symmetrical nicks in paired strands. Promotes annealing of linear ssDNA with homologous dsDNA. Required for DNA repair, homologous recombination and chromosome segregation. The protein is Holliday junction resolvase RecU of Shouchella clausii (strain KSM-K16) (Alkalihalobacillus clausii).